The following is a 290-amino-acid chain: Shikimate kinase (290 aa).

81-91 is a binding site for ATP; it reads PIASGLKSSSA.

This sequence belongs to the GHMP kinase family. Archaeal shikimate kinase subfamily.

The protein localises to the cytoplasm. It catalyses the reaction shikimate + ATP = 3-phosphoshikimate + ADP + H(+). Its pathway is metabolic intermediate biosynthesis; chorismate biosynthesis; chorismate from D-erythrose 4-phosphate and phosphoenolpyruvate: step 5/7. This is Shikimate kinase from Methanocella arvoryzae (strain DSM 22066 / NBRC 105507 / MRE50).